Here is a 134-residue protein sequence, read N- to C-terminus: Small ribosomal subunit protein bS6 (134 aa).

The interval 103 to 134 (AAPVKSAEEGTEEVAAEAATEAPAETTTTVEV) is disordered. Residues 118-134 (AEAATEAPAETTTTVEV) show a composition bias toward low complexity.

It belongs to the bacterial ribosomal protein bS6 family.

In terms of biological role, binds together with bS18 to 16S ribosomal RNA. The protein is Small ribosomal subunit protein bS6 of Geobacter sp. (strain M21).